Consider the following 470-residue polypeptide: Dihydrolipoyl dehydrogenase (470 aa).

FAD is bound by residues 39–47 (EKATLGGVC), K56, and A119. C47 and C52 are joined by a disulfide. NAD(+)-binding positions include 183-187 (GGGYI), E206, and 272-275 (TVGR). The FAD site is built by D315 and A323. Catalysis depends on H447, which acts as the Proton acceptor.

The protein belongs to the class-I pyridine nucleotide-disulfide oxidoreductase family. Homodimer. Component of two multienzyme complexes: pyruvate dehydrogenase complex and oxoglutarate dehydrogenase complex. It depends on FAD as a cofactor.

It is found in the cytoplasm. It catalyses the reaction N(6)-[(R)-dihydrolipoyl]-L-lysyl-[protein] + NAD(+) = N(6)-[(R)-lipoyl]-L-lysyl-[protein] + NADH + H(+). In terms of biological role, catalyzes the oxidation of dihydrolipoamide to lipoamide. The polypeptide is Dihydrolipoyl dehydrogenase (pdhD) (Bacillus subtilis (strain 168)).